Here is a 72-residue protein sequence, read N- to C-terminus: Delta-actitoxin-Avd2b 3 (72 aa).

Residues methionine 1–alanine 21 form the signal peptide. The propeptide occupies asparagine 22–glycine 42. Cystine bridges form between cysteine 47/cysteine 62, cysteine 48/cysteine 56, and cysteine 50/cysteine 67.

It belongs to the sea anemone short toxin (type III) family.

The protein resides in the secreted. It is found in the nematocyst. Its function is as follows. Voltage-gated sodium channel (Nav) inhibitor. 1 uM completely inhibits insect voltage-gated sodium channel inactivation (DmNav1 from D.melanogaster). This chain is Delta-actitoxin-Avd2b 3, found in Anemonia viridis (Snakelocks anemone).